A 1032-amino-acid chain; its full sequence is Argonaute protein hrde-1 (1032 aa).

Disordered regions lie at residues 1–51 (MADL…PIGR) and 298–375 (KLSE…YSPS). The segment at 1 to 551 (MADLLDKIMG…IQMTAKLLPP (551 aa)) is required to recruit the small-RNA amplification machinery to gene targets and promote gene silencing. Positions 18-33 (PKRDNRMNQDKDEPTS) are enriched in basic and acidic residues. Gly residues predominate over residues 303–313 (KGGGGGRGGYG). Basic and acidic residues-rich tracts occupy residues 315–335 (SDSR…RDFR) and 343–364 (GNDR…RRDS). The PAZ domain occupies 376–481 (DAAELEHAFG…FPMELLRIAP (106 aa)). Residues 650–977 (DILVGIAREK…LAKRGRNNYK (328 aa)) form the Piwi domain.

This sequence belongs to the argonaute family. WAGO subfamily. In terms of tissue distribution, expressed in the nuclei of male and female germ cells.

The protein localises to the cytoplasm. Its subcellular location is the cytoplasmic ribonucleoprotein granule. It is found in the nucleus. Functionally, argonaute protein which is involved in the endogenous small interfering RNA (endo-siRNA) pathway and is required for RNA-mediated gene silencing (RNAi) in the germline. Interacts with secondary 22G-RNAs in an hrde-2-dependent manner; 22G-RNAs are RNA-dependent RNA polymerase-derived endo-siRNAs, typically 22 nucleotides in length with a 5'-guanosine residue. Plays a key role in transgenerational epigenetic inheritance and germline immortality. May be involved in transgenerational gene silencing both by inducing subnuclear-co-localization of target genes into heterochromatin and by activation of small RNA amplification in the nuage. The chain is Argonaute protein hrde-1 from Caenorhabditis elegans.